The following is a 511-amino-acid chain: Neuronal acetylcholine receptor subunit alpha-2 (511 aa).

Positions 1–27 (MTLSHSALQFWTHLYLWCLLLVPAVLT) are cleaved as a signal peptide. At 28-241 (QQGSHTHAED…VTYYFVIRRL (214 aa)) the chain is on the extracellular side. N-linked (GlcNAc...) asparagine glycans are attached at residues N56 and N106. C160 and C174 are oxidised to a cystine. Residue N212 is glycosylated (N-linked (GlcNAc...) asparagine). A disulfide bridge links C224 with C225. Transmembrane regions (helical) follow at residues 242-266 (PLFY…VFYL), 274-292 (ITLC…LLIT), and 308-329 (YLLF…VLNV). At 330-484 (HHRSPSTHNM…WKYVAMVVDR (155 aa)) the chain is on the cytoplasmic side. A helical membrane pass occupies residues 485-503 (IFLWLFIIVCFLGTIGLFL).

Belongs to the ligand-gated ion channel (TC 1.A.9) family. Acetylcholine receptor (TC 1.A.9.1) subfamily. Alpha-2/CHRNA2 sub-subfamily. As to quaternary structure, neuronal AChR seems to be composed of two different types of subunits: alpha and non-alpha (beta). CHRNA2/Alpha-2 subunit can be combined to CHRNB2/beta-2 or CHRNB4/beta-4 to give rise to functional receptors. The alpha-2:beta-2 nAChR complex is proposed to be a heteropentamer with two subtypes: LS (low agonist sensitivity) with a (alpha-2)3:(beta-2)2 and HS (high agonist sensitivity) with a (alpha-2)2:(beta-2)3 stoichiometry; the subtypes differ in their subunit binding interfaces which are involved in ligand binding.

Its subcellular location is the synaptic cell membrane. The protein resides in the cell membrane. The enzyme catalyses Ca(2+)(in) = Ca(2+)(out). It catalyses the reaction K(+)(in) = K(+)(out). It carries out the reaction Na(+)(in) = Na(+)(out). In terms of biological role, component of neuronal acetylcholine receptors (nAChRs) that function as pentameric, ligand-gated cation channels with high calcium permeability among other activities. nAChRs are excitatory neurotrasnmitter receptors formed by a collection of nAChR subunits known to mediate synaptic transmission in the nervous system and the neuromuscular junction. Each nAchR subunit confers differential attributes to channel properties, including activation, deactivation and desensitization kinetics, pH sensitivity, cation permeability, and binding to allosteric modulators. CHRNA2 forms heteropentameric neuronal acetylcholine receptors with CHRNB2 and CHRNB4 and plays a role in nicotine dependence. This chain is Neuronal acetylcholine receptor subunit alpha-2 (Chrna2), found in Rattus norvegicus (Rat).